Reading from the N-terminus, the 1624-residue chain is ATP-binding cassette sub-family A member 6 (1624 aa).

Residues 31–51 form a helical membrane-spanning segment; that stretch reads LLEWSIPIIIGLHMGLFSYLA. 2 N-linked (GlcNAc...) asparagine glycosylation sites follow: Asn-84 and Asn-91. 6 helical membrane-spanning segments follow: residues 222–242, 267–287, 297–317, 326–346, 356–376, and 395–415; these read IFIL…SSNV, WGLI…IIIT, FLVI…VTFL, VLTN…GFTV, EWVL…KVIF, and VMIA…VLAL. The region spanning 478–713 is the ABC transporter 1 domain; the sequence is IRIRNIKKEY…WGLGYHLSLF (236 aa). 514-521 serves as a coordination point for ATP; it reads GHSGAGKS. An N-linked (GlcNAc...) asparagine glycan is attached at Asn-576. 8 helical membrane-spanning segments follow: residues 854–874, 971–991, 1005–1025, 1058–1078, 1094–1114, 1130–1150, 1154–1174, and 1194–1214; these read AFLI…IEYV, LHCF…MLNH, FIVL…CVIC, WCGQ…TSYF, IVFS…FLTY, WSIC…NGPF, LVIS…LVVL, and AVDL…IFVL. The 239-residue stretch at 1282–1520 folds into the ABC transporter 2 domain; the sequence is LHKEYAGQKK…FGQDYVLELR (239 aa). An ATP-binding site is contributed by 1320–1327; the sequence is GPDGAGKS.

This sequence belongs to the ABC transporter superfamily. ABCA family. Widely expressed with higher expression in heart, lung, brain, spleen and testis.

The protein resides in the golgi apparatus membrane. Its function is as follows. Probable transporter which may play a role in macrophage lipid transport and homeostasis. This Mus musculus (Mouse) protein is ATP-binding cassette sub-family A member 6 (Abca6).